Consider the following 925-residue polypeptide: Periplasmic nitrate reductase (925 aa).

Residues 1–30 (MDRREFIKSSAAAAACSAAGIAVPSSLSAA) constitute a signal peptide (tat-type signal). In terms of domain architecture, 4Fe-4S Mo/W bis-MGD-type spans 36 to 92 (WRWDKSACRFCGTGCGIMVATKNGKIVAVKGDPLAPVNRGLNCIKGYFNAKIMYGED). Positions 43, 46, 50, and 78 each coordinate [4Fe-4S] cluster. Residues Lys-80, Gln-148, Asn-173, Cys-177, 210–217 (WGANMAEM), Met-418, Gln-422, Asn-528, 553–554 (SD), Lys-576, Asp-603, and 815–824 (TGRVLEHWHS) each bind Mo-bis(molybdopterin guanine dinucleotide). Trp-891 is a binding site for substrate. Mo-bis(molybdopterin guanine dinucleotide) is bound by residues Asn-899 and Lys-916.

The protein belongs to the prokaryotic molybdopterin-containing oxidoreductase family. NasA/NapA/NarB subfamily. In terms of assembly, component of the periplasmic nitrate reductase NapAB complex composed of NapA and NapB. The cofactor is [4Fe-4S] cluster. Mo-bis(molybdopterin guanine dinucleotide) is required as a cofactor. Predicted to be exported by the Tat system. The position of the signal peptide cleavage has not been experimentally proven.

The protein localises to the periplasm. The enzyme catalyses 2 Fe(II)-[cytochrome] + nitrate + 2 H(+) = 2 Fe(III)-[cytochrome] + nitrite + H2O. Functionally, catalytic subunit of the periplasmic nitrate reductase complex NapAB. Receives electrons from NapB and catalyzes the reduction of nitrate to nitrite. This is Periplasmic nitrate reductase from Campylobacter fetus subsp. fetus (strain 82-40).